The primary structure comprises 116 residues: Large ribosomal subunit protein eL22A (116 aa).

It belongs to the eukaryotic ribosomal protein eL22 family.

The sequence is that of Large ribosomal subunit protein eL22A (rpl22) from Dictyostelium discoideum (Social amoeba).